A 527-amino-acid chain; its full sequence is Fusicoccadiene C-8 hydroxylase (527 aa).

Residues 15–35 (GKPLLLFLILITLTYSLGIVF) form a helical membrane-spanning segment. An N-linked (GlcNAc...) asparagine glycan is attached at N125. Residue C465 coordinates heme. N-linked (GlcNAc...) asparagine glycosylation is present at N496.

The protein belongs to the cytochrome P450 family. Heme is required as a cofactor.

Its subcellular location is the membrane. It participates in mycotoxin biosynthesis. In terms of biological role, cytochrome P450 monooxygenase; part of the gene cluster that mediates the biosynthesis of the diterpene glucoside brassicicene C. In the first step of the brassicicene C biosynthesis, the bifunctional diterpene synthase bsc8 that possesses both prenyl transferase and terpene cyclase activity, converts isopentenyl diphosphate and dimethylallyl diphosphate into geranylgeranyl diphosphate (GGDP) that is further converted into fusicocca-2,10(14)-diene, the first precursor for brassicicene C. Fusicocca-2,10(14)-diene is then substrate of cytochrome P450 monooxygenase bsc1 for hydroxylation at the C-8 position. Oxidation at C-16 position to aldehyde is then catalyzed by the cytochrome P450 monooyxygenase bsc7, yielding fusicocca-2,10(14)-diene-8-beta,16-diol. Follows the isomerization of the double bond and reduction of aldehyde to alcohol catalyzed by the short-chain dehydrogenase/reductase bsc3 to yield the diol compound fusicocca-1,10(14)-diene-8 beta,16-diol. The next step is the oxidation at the C-3 position of fusicocca-2,10(14)-diene-8-beta,16-diol catalyzed by the alpha-ketoglutarate dependent dioxygenase bsc9, to produce a triol compound. Methylation of the hydroxy group at position 16 is performed by the methyltransferase bsc6. 16-O-methylation is followed by oxidation at the C-13 position to ketone and an alkyl shift of the methyl group leads to brassicicene C. Although the probable acetyltransferase bsc4 is included in the gene cluster, no acetylation reactions are necessary for brassicicene C biosynthesis. However, the fact that brassicicene E, which is a structurally related compound having an acetoxy group at position 12, was previously isolated from another strain of A.brassicicola suggests that the ATCC 96836 strain might also produce a small amount of brassicicene E. This chain is Fusicoccadiene C-8 hydroxylase, found in Alternaria brassicicola (Dark leaf spot agent).